Reading from the N-terminus, the 630-residue chain is Chaperone protein HtpG (630 aa).

An a; substrate-binding region spans residues 1–339 (MKGQETRGFQ…SNDLPLNVSR (339 aa)). The tract at residues 340–555 (EILQDNSITR…VDEMSTQMAK (216 aa)) is b. Residues 556-630 (LFAAAGQQVP…MNQLLLSEKA (75 aa)) are c.

Belongs to the heat shock protein 90 family. As to quaternary structure, homodimer.

The protein resides in the cytoplasm. Molecular chaperone. Has ATPase activity. This Photorhabdus laumondii subsp. laumondii (strain DSM 15139 / CIP 105565 / TT01) (Photorhabdus luminescens subsp. laumondii) protein is Chaperone protein HtpG.